Consider the following 119-residue polypeptide: Ribonuclease P protein component (119 aa).

The interval 1-24 (MRGSSRFRPHEKLRASDDYQRVKR) is disordered. Residues 8–21 (RPHEKLRASDDYQR) are compositionally biased toward basic and acidic residues.

It belongs to the RnpA family. Consists of a catalytic RNA component (M1 or rnpB) and a protein subunit.

The enzyme catalyses Endonucleolytic cleavage of RNA, removing 5'-extranucleotides from tRNA precursor.. In terms of biological role, RNaseP catalyzes the removal of the 5'-leader sequence from pre-tRNA to produce the mature 5'-terminus. It can also cleave other RNA substrates such as 4.5S RNA. The protein component plays an auxiliary but essential role in vivo by binding to the 5'-leader sequence and broadening the substrate specificity of the ribozyme. The protein is Ribonuclease P protein component of Syntrophobacter fumaroxidans (strain DSM 10017 / MPOB).